A 444-amino-acid chain; its full sequence is Glutamyl-tRNA reductase (444 aa).

Residues 49 to 52, serine 109, 114 to 116, and glutamine 120 contribute to the substrate site; these read TCNR and ETQ. Residue cysteine 50 is the Nucleophile of the active site. 189 to 194 lines the NADP(+) pocket; it reads GAGKMG.

Belongs to the glutamyl-tRNA reductase family. Homodimer.

It catalyses the reaction (S)-4-amino-5-oxopentanoate + tRNA(Glu) + NADP(+) = L-glutamyl-tRNA(Glu) + NADPH + H(+). It functions in the pathway porphyrin-containing compound metabolism; protoporphyrin-IX biosynthesis; 5-aminolevulinate from L-glutamyl-tRNA(Glu): step 1/2. Its function is as follows. Catalyzes the NADPH-dependent reduction of glutamyl-tRNA(Glu) to glutamate 1-semialdehyde (GSA). The protein is Glutamyl-tRNA reductase of Bacillus cereus (strain G9842).